The primary structure comprises 144 residues: UPF0102 protein BURPS1106A_3900 (144 aa).

A disordered region spans residues 1 to 28 (MCHAREASPGTGEPEAAPRDNFPRAAGS).

It belongs to the UPF0102 family.

This chain is UPF0102 protein BURPS1106A_3900, found in Burkholderia pseudomallei (strain 1106a).